A 361-amino-acid polypeptide reads, in one-letter code: Mannose-1-phosphate guanyltransferase (361 aa).

The protein belongs to the transferase hexapeptide repeat family.

Its subcellular location is the cytoplasm. The catalysed reaction is alpha-D-mannose 1-phosphate + GTP + H(+) = GDP-alpha-D-mannose + diphosphate. Its pathway is nucleotide-sugar biosynthesis; GDP-alpha-D-mannose biosynthesis; GDP-alpha-D-mannose from alpha-D-mannose 1-phosphate (GTP route): step 1/1. Its function is as follows. Involved in cell wall synthesis where it is required for glycosylation. Involved in cell cycle progression through cell-size checkpoint. The polypeptide is Mannose-1-phosphate guanyltransferase (MPG1) (Eremothecium gossypii (strain ATCC 10895 / CBS 109.51 / FGSC 9923 / NRRL Y-1056) (Yeast)).